The sequence spans 436 residues: Ribulose bisphosphate carboxylase large chain (436 aa).

Asn-104 and Thr-154 together coordinate substrate. Lys-156 acts as the Proton acceptor in catalysis. Substrate is bound at residue Lys-158. The Mg(2+) site is built by Lys-182, Asp-184, and Glu-185. Lys-182 bears the N6-carboxylysine mark. The active-site Proton acceptor is His-275. The substrate site is built by Arg-276, His-308, and Ser-360.

It belongs to the RuBisCO large chain family. Type I subfamily. In terms of assembly, heterohexadecamer of 8 large chains and 8 small chains; disulfide-linked. The disulfide link is formed within the large subunit homodimers. Mg(2+) serves as cofactor. Post-translationally, the disulfide bond which can form in the large chain dimeric partners within the hexadecamer appears to be associated with oxidative stress and protein turnover.

Its subcellular location is the plastid. The protein resides in the chloroplast. The catalysed reaction is 2 (2R)-3-phosphoglycerate + 2 H(+) = D-ribulose 1,5-bisphosphate + CO2 + H2O. It catalyses the reaction D-ribulose 1,5-bisphosphate + O2 = 2-phosphoglycolate + (2R)-3-phosphoglycerate + 2 H(+). In terms of biological role, ruBisCO catalyzes two reactions: the carboxylation of D-ribulose 1,5-bisphosphate, the primary event in carbon dioxide fixation, as well as the oxidative fragmentation of the pentose substrate in the photorespiration process. Both reactions occur simultaneously and in competition at the same active site. This is Ribulose bisphosphate carboxylase large chain from Euglena geniculata.